The chain runs to 571 residues: Polypeptide N-acetylgalactosaminyltransferase 2 (571 aa).

The Cytoplasmic segment spans residues 1-6 (MRRRSR). Residues 7 to 24 (MLLCFAFLWVLGIAYYMY) traverse the membrane as a helical; Signal-anchor for type II membrane protein segment. Topologically, residues 25–571 (SGGGSALAGG…QWKFTLNLQQ (547 aa)) are lumenal. S29 carries an O-linked (Xyl...) (chondroitin sulfate) serine glycan. Residues 53–66 (KKDLHHSNGEEKAQ) show a composition bias toward basic and acidic residues. Residues 53 to 74 (KKDLHHSNGEEKAQSMETLPPG) form a disordered region. Disulfide bonds link C126-C354, C345-C423, C456-C473, and C496-C513. Residues 135 to 240 (LPATSVVITF…EHWLEPLLER (106 aa)) are catalytic subdomain A. 3 residues coordinate substrate: T143, D176, and R201. D224 contacts Mn(2+). S225 serves as a coordination point for substrate. H226 serves as a coordination point for Mn(2+). Residues 300–362 (PIKTPMIAGG…PCSRVGHVFR (63 aa)) are catalytic subdomain B. Residue W331 participates in substrate binding. H359 is a Mn(2+) binding site. Positions 362, 365, and 367 each coordinate substrate. The region spanning 443–566 (QDIAFGALQQ…PALSQQWKFT (124 aa)) is the Ricin B-type lectin domain. Position 536 is a phosphoserine (S536). A disulfide bond links C539 and C555.

The protein belongs to the glycosyltransferase 2 family. GalNAc-T subfamily. Mn(2+) serves as cofactor. In terms of tissue distribution, detected in urine (at protein level). Widely expressed.

Its subcellular location is the golgi apparatus. The protein resides in the golgi stack membrane. It localises to the secreted. The enzyme catalyses L-seryl-[protein] + UDP-N-acetyl-alpha-D-galactosamine = a 3-O-[N-acetyl-alpha-D-galactosaminyl]-L-seryl-[protein] + UDP + H(+). The catalysed reaction is L-threonyl-[protein] + UDP-N-acetyl-alpha-D-galactosamine = a 3-O-[N-acetyl-alpha-D-galactosaminyl]-L-threonyl-[protein] + UDP + H(+). The protein operates within protein modification; protein glycosylation. Functionally, catalyzes the initial reaction in O-linked oligosaccharide biosynthesis, the transfer of an N-acetyl-D-galactosamine residue to a serine or threonine residue on the protein receptor. Has a broad spectrum of substrates for peptides such as EA2, Muc5AC, Muc1a, Muc1b. Probably involved in O-linked glycosylation of the immunoglobulin A1 (IgA1) hinge region. Involved in O-linked glycosylation of APOC-III, ANGPTL3 and PLTP. It participates in the regulation of HDL-C metabolism. This Homo sapiens (Human) protein is Polypeptide N-acetylgalactosaminyltransferase 2 (GALNT2).